Consider the following 683-residue polypeptide: Putative boron transporter 5 (683 aa).

The Cytoplasmic segment spans residues 1-38 (MEEERVEGSKRPFQGIIRDVKGRALCYKQDWIAGLRSG). A helical transmembrane segment spans residues 39–59 (FGILAPTTYVFFASALPVIAF). The Extracellular portion of the chain corresponds to 60–80 (GEQLSHDTERSLSTVETLAST). The helical transmembrane segment at 81–101 (ALCGVIHSLLGGQPLLILGVA) threads the bilayer. Residues 102 to 126 (EPTVLMYKYLYDFAKGRPELGKQLY) lie on the Cytoplasmic side of the membrane. A helical membrane pass occupies residues 127–147 (LAWVAWVCVWTALLLFLMAIF). Over 148 to 158 (NMAYIINRFTR) the chain is Extracellular. A helical membrane pass occupies residues 159-179 (IAGELFGMLIAVLFLQQTIKG). Topologically, residues 180-200 (MVSEFRIPKGEDSKLEKYQFE) are cytoplasmic. A helical membrane pass occupies residues 201–221 (WLYTNGLLGLIFTVGLVYTAL). Over 222–238 (KSRKARSWPYGTGCCRS) the chain is Extracellular. A helical membrane pass occupies residues 239–259 (FVADYGVPLMVVVWTALSFST). Residues 260–294 (PSKLPSGVPRRLVSPLPWDSVSLTHWTVIKDMGKV) lie on the Cytoplasmic side of the membrane. A helical membrane pass occupies residues 295–315 (SPGYIFAAFIPALMIAGLYFF). Residues 316–335 (DHSVVSQLAQQKEFNLKNPS) lie on the Extracellular side of the membrane. A helical transmembrane segment spans residues 336–356 (AYHYDILLLGFMVLICGMLGL). Residues 357–477 (PPSNGVLPQS…EQRVSNLLQS (121 aa)) are Cytoplasmic-facing. The helical transmembrane segment at 478-498 (LLVIGAVFALPVIKLIPTSLL) threads the bilayer. The Extracellular portion of the chain corresponds to 499–565 (WGYFAYMAID…QILYFGLCYG (67 aa)). Residues 566–586 (VTWIPVAGIMFPVLFFLLVAI) traverse the membrane as a helical segment. Residues 587 to 683 (RQYLLPKLFK…GDGDMSSSRE (97 aa)) lie on the Cytoplasmic side of the membrane.

It belongs to the anion exchanger (TC 2.A.31.3) family.

The protein resides in the membrane. Its function is as follows. Putative boron transporter. Boron is essential for maintaining the integrity of plants cell walls. This Arabidopsis thaliana (Mouse-ear cress) protein is Putative boron transporter 5 (BOR5).